A 269-amino-acid polypeptide reads, in one-letter code: Phosphate import ATP-binding protein PstB 1 (269 aa).

The ABC transporter domain maps to Leu23–Val264. Gly55–Ser62 lines the ATP pocket.

Belongs to the ABC transporter superfamily. Phosphate importer (TC 3.A.1.7) family. The complex is composed of two ATP-binding proteins (PstB), two transmembrane proteins (PstC and PstA) and a solute-binding protein (PstS).

The protein resides in the cell membrane. The enzyme catalyses phosphate(out) + ATP + H2O = ADP + 2 phosphate(in) + H(+). Part of the ABC transporter complex PstSACB involved in phosphate import. Responsible for energy coupling to the transport system. The polypeptide is Phosphate import ATP-binding protein PstB 1 (Latilactobacillus sakei subsp. sakei (strain 23K) (Lactobacillus sakei subsp. sakei)).